A 476-amino-acid chain; its full sequence is Zinc metalloproteinase/disintegrin (476 aa).

Positions 1 to 20 are cleaved as a signal peptide; sequence MIQVLLVTICLAAFPYQGSS. The propeptide occupies 21-192; sequence IILESGNVND…ASQSNLTPEQ (172 aa). Gln193 carries the post-translational modification Pyrrolidone carboxylic acid. The 196-residue stretch at 198–393 folds into the Peptidase M12B domain; it reads RYIELAVVAD…HNPQCILNKP (196 aa). The Ca(2+) site is built by Glu201 and Asp285. Disulfide bonds link Cys309/Cys388, Cys348/Cys372, and Cys350/Cys355. Residue His334 coordinates Zn(2+). Glu335 is an active-site residue. 2 residues coordinate Zn(2+): His338 and His344. Cys388 and Asn391 together coordinate Ca(2+). Residues 394-403 constitute a propeptide that is removed on maturation; it reads LTTVSGNELL. The region spanning 395–476 is the Disintegrin domain; sequence TTVSGNELLE…ADCPRNRFHA (82 aa). 6 cysteine pairs are disulfide-bonded: Cys409-Cys424, Cys411-Cys419, Cys418-Cys441, Cys432-Cys438, Cys437-Cys462, and Cys450-Cys469. Residues 454–456 carry the Cell attachment site motif; it reads RGD.

The protein belongs to the venom metalloproteinase (M12B) family. P-II subfamily. P-IIa sub-subfamily. Monomer (metalloprotease). Zn(2+) serves as cofactor. In terms of processing, the N-terminus is blocked. Post-translationally, not glycosylated. Expressed by the venom gland.

It localises to the secreted. With respect to regulation, inhibited by EDTA, and 1,10-phenanthroline, but not by PMSF. In terms of biological role, non-hemorrhagic proteinase that activates prothrombin (F2) calcium-independently. Activates factor X (F10) and hydrolyzes the Aalpha-chain and more slowly the Bbeta-chain of fibrin and fibrinogen without affecting the gamma chain. It induces neither detachment nor apoptosis of human endothelial cells and is also not able to trigger an endothelial pro-inflammatory cell response. Nitric oxide and prostacyclin levels released by endothelial cells are significantly increased after treatment with insularinase A. Inhibits ADP-induced platelet aggregation (IC(50)=0.8 uM for native protein). Interestingly, inhibits the adhesion of HUVECs to immobilized fibrinogen at very low concentrations (IC(50)=36 nM). This chain is Zinc metalloproteinase/disintegrin, found in Bothrops insularis (Golden lancehead).